Here is a 485-residue protein sequence, read N- to C-terminus: UDP-N-acetylmuramate--L-alanine ligase (485 aa).

125 to 131 (GTHGKTT) is an ATP binding site.

This sequence belongs to the MurCDEF family.

Its subcellular location is the cytoplasm. The catalysed reaction is UDP-N-acetyl-alpha-D-muramate + L-alanine + ATP = UDP-N-acetyl-alpha-D-muramoyl-L-alanine + ADP + phosphate + H(+). It functions in the pathway cell wall biogenesis; peptidoglycan biosynthesis. Cell wall formation. The protein is UDP-N-acetylmuramate--L-alanine ligase of Stutzerimonas stutzeri (strain A1501) (Pseudomonas stutzeri).